Consider the following 269-residue polypeptide: Tryptophan synthase alpha chain (269 aa).

Active-site proton acceptor residues include glutamate 49 and aspartate 60.

The protein belongs to the TrpA family. Tetramer of two alpha and two beta chains.

It catalyses the reaction (1S,2R)-1-C-(indol-3-yl)glycerol 3-phosphate + L-serine = D-glyceraldehyde 3-phosphate + L-tryptophan + H2O. The protein operates within amino-acid biosynthesis; L-tryptophan biosynthesis; L-tryptophan from chorismate: step 5/5. In terms of biological role, the alpha subunit is responsible for the aldol cleavage of indoleglycerol phosphate to indole and glyceraldehyde 3-phosphate. The protein is Tryptophan synthase alpha chain of Pseudomonas entomophila (strain L48).